A 154-amino-acid polypeptide reads, in one-letter code: Transcriptional repressor NrdR (154 aa).

The segment at Cys-3–Cys-34 is a zinc-finger region. The ATP-cone domain maps to Leu-46–Asp-136.

The protein belongs to the NrdR family. Zn(2+) serves as cofactor.

In terms of biological role, negatively regulates transcription of bacterial ribonucleotide reductase nrd genes and operons by binding to NrdR-boxes. This is Transcriptional repressor NrdR from Salinispora tropica (strain ATCC BAA-916 / DSM 44818 / JCM 13857 / NBRC 105044 / CNB-440).